The primary structure comprises 518 residues: Glutamate--cysteine ligase (518 aa).

Belongs to the glutamate--cysteine ligase type 1 family. Type 1 subfamily.

The catalysed reaction is L-cysteine + L-glutamate + ATP = gamma-L-glutamyl-L-cysteine + ADP + phosphate + H(+). Its pathway is sulfur metabolism; glutathione biosynthesis; glutathione from L-cysteine and L-glutamate: step 1/2. The chain is Glutamate--cysteine ligase from Escherichia coli O8 (strain IAI1).